A 540-amino-acid polypeptide reads, in one-letter code: Coiled-coil domain-containing protein 116 (540 aa).

Positions 79-102 form a coiled coil; that stretch reads QVLDSLQTVVEQATECVATMKTEA. Residues 347-400 form a disordered region; it reads PGNSDLQPSSKASLPTDREARGETCYSPTSASSPKTSHRKSKDRRGSPSNAVQM. Polar residues-rich tracts occupy residues 350–359 and 372–381; these read SDLQPSSKAS and YSPTSASSPK. S393 bears the Phosphoserine mark.

It is found in the cytoplasm. The protein localises to the cytoskeleton. The protein resides in the microtubule organizing center. It localises to the centrosome. In Rattus norvegicus (Rat), this protein is Coiled-coil domain-containing protein 116 (Ccdc116).